The chain runs to 500 residues: NAD(P)H-quinone oxidoreductase chain 4, chloroplastic (500 aa).

14 helical membrane-spanning segments follow: residues 4-24 (FPWL…MLFL), 35-55 (YTIC…CYNF), 87-107 (IGTI…AFPV), 113-130 (LFHF…GSFS), 134-154 (LLLF…LLSM), 167-187 (FILY…GISL), 211-231 (IILY…IPLH), 242-262 (HYST…YGLV), 272-292 (AHSM…IYAA), 305-325 (IAYS…SITD), 330-350 (GAIL…FLAG), 386-406 (LALP…GIIT), 416-436 (ILII…LLSM), and 466-486 (ISSL…LALA).

Belongs to the complex I subunit 4 family.

It localises to the plastid. It is found in the chloroplast thylakoid membrane. The enzyme catalyses a plastoquinone + NADH + (n+1) H(+)(in) = a plastoquinol + NAD(+) + n H(+)(out). It catalyses the reaction a plastoquinone + NADPH + (n+1) H(+)(in) = a plastoquinol + NADP(+) + n H(+)(out). The protein is NAD(P)H-quinone oxidoreductase chain 4, chloroplastic of Aethionema grandiflorum (Persian stone-cress).